A 388-amino-acid polypeptide reads, in one-letter code: Na(+)/H(+) antiporter NhaA (388 aa).

Topologically, residues 1–11 are cytoplasmic; it reads MKHLHRFFSSD. The helical transmembrane segment at 12 to 31 threads the bilayer; that stretch reads ASGGIILIIAAVLAMIMANS. Topologically, residues 32 to 58 are periplasmic; that stretch reads GATSGWYHDFLETPVQLRVGTLEINKN. The chain crosses the membrane as a helical span at residues 59–80; that stretch reads MLLWINDALMAVFFLLVGLEVK. Residues 81–96 are Cytoplasmic-facing; sequence RELMQGSLASLRQAAF. Residues 97–116 form a helical membrane-spanning segment; it reads PVIAAIGGMIVPALLYLAFN. Over 117–122 the chain is Periplasmic; sequence YADPIT. A helical membrane pass occupies residues 123 to 130; sequence REGWAIPA. Over 131 to 154 the chain is Cytoplasmic; it reads ATDIAFALGVLALLGSRVPLALKI. The chain crosses the membrane as a helical span at residues 155–176; the sequence is FLMALAIIDDLGAIIIIALFYT. Residues 177-180 are Periplasmic-facing; that stretch reads NDLS. The helical transmembrane segment at 181 to 200 threads the bilayer; sequence MASLGVAAVAIAVLAVLNLC. Residues 201–204 are Cytoplasmic-facing; the sequence is GVRR. Residues 205-222 traverse the membrane as a helical segment; sequence TGVYILVGVVLWTAVLKS. Residue Gly223 is a topological domain, periplasmic. Residues 224–236 form a helical membrane-spanning segment; the sequence is VHATLAGVIVGFF. Topologically, residues 237 to 253 are cytoplasmic; sequence IPLKEKHGRSPAKRLEH. Residues 254 to 272 form a helical membrane-spanning segment; it reads VLHPWVAYLILPLFAFANA. Residues 273–286 are Periplasmic-facing; the sequence is GVSLQGVTLEGLTS. Residues 287-310 traverse the membrane as a helical segment; it reads ILPLGIIAGLLIGKPLGISLFCWL. At 311–339 the chain is on the cytoplasmic side; it reads ALRLKLAHLPEGTTYQQIMAVGILCGIGF. Residues 340–350 form a helical membrane-spanning segment; the sequence is TMSIFIASLAF. The Periplasmic segment spans residues 351-357; that stretch reads GSVDPEL. The chain crosses the membrane as a helical span at residues 358 to 380; it reads INWAKLGILVGSISSAVIGYSWL. Residues 381-388 are Cytoplasmic-facing; the sequence is RVRLRPSV.

This sequence belongs to the NhaA Na(+)/H(+) (TC 2.A.33) antiporter family.

Its subcellular location is the cell inner membrane. It catalyses the reaction Na(+)(in) + 2 H(+)(out) = Na(+)(out) + 2 H(+)(in). In terms of biological role, na(+)/H(+) antiporter that extrudes sodium in exchange for external protons. The protein is Na(+)/H(+) antiporter NhaA of Escherichia coli O6:K15:H31 (strain 536 / UPEC).